Consider the following 72-residue polypeptide: U-actitoxin-Aeq5b (72 aa).

An N-terminal signal peptide occupies residues 1–20; it reads MNQVMTIFLVLGVIVYSVES. 4 disulfide bridges follow: C33-C71, C37-C66, C44-C59, and C50-C56.

It belongs to the Acrorhagin I family. As to expression, expressed by acrorhagi.

It localises to the secreted. The protein resides in the nematocyst. Its function is as follows. Toxin that is lethal to crab. It interacts with divalent metal ions (zinc and nickel) suggesting it may function as a metal ion chelator to regulate metal ion levels or as a metal ion transporter, or that its function is modulated by metal ions. Is not active against any of the voltage-gated potassium and sodium channels tested. In addition, it does not show activity in bacterial and fungal growth inhibitory assays as well as in hemolytic assays. The chain is U-actitoxin-Aeq5b from Actinia equina (Beadlet anemone).